Reading from the N-terminus, the 75-residue chain is Dermaseptin-SP5 (75 aa).

The N-terminal stretch at 1 to 22 (MAFLKKSLFLVLFLGLVSLSMC) is a signal peptide. Positions 23 to 45 (EEEKRENEVEEEQEDDEQSELRR) are excised as a propeptide. Residues 26–46 (KRENEVEEEQEDDEQSELRRS) form a disordered region. Residues 30-40 (EVEEEQEDDEQ) are compositionally biased toward acidic residues. A Proline amide modification is found at P72. Positions 74–75 (EQ) are excised as a propeptide.

The protein belongs to the frog skin active peptide (FSAP) family. Dermaseptin subfamily. As to expression, expressed by the skin glands.

The protein localises to the secreted. The protein resides in the target cell membrane. Its function is as follows. Antimicrobial peptide with weak activity against Gram-positive and Gram-negative bacteria and fungi. Has been tested against E.coli (MIC=96.06-256 uM), S.aureus (MIC&gt;192.12 uM), K.pneumoniae (MIC&gt;189.00 uM) and C.albicans (MIC=384.24-1024 uM). Probably acts by disturbing membrane functions with its alpha-helical amphipathic structure. May penetrate bacterial membranes, but stay at the mammalian membrane surface. Does not show hemolytic activity. Does not interact at all with cardiolipin. The sequence is that of Dermaseptin-SP5 from Agalychnis spurrelli (Gliding leaf frog).